Consider the following 802-residue polypeptide: Bifunctional purine biosynthetic protein ADE5,7 (802 aa).

The GARS stretch occupies residues 1-444 (MPEITAFPQP…FRRDIAYRAL (444 aa)). The ATP-grasp domain maps to 126–339 (KEFMARHNIP…LAEVLLACVE (214 aa)). Residue 157–218 (KPFTSGRSVI…EEYLSGPEIS (62 aa)) participates in ATP binding. Mg(2+) contacts are provided by Glu-307 and Asn-309. An AIRS region spans residues 455 to 788 (LTYAAAGVSV…EAWVIGEVQE (334 aa)).

This sequence in the N-terminal section; belongs to the GARS family. It in the C-terminal section; belongs to the AIR synthase family. As to quaternary structure, homodimer. It depends on Mg(2+) as a cofactor. Mn(2+) serves as cofactor.

It is found in the cytoplasm. It localises to the cytosol. It carries out the reaction 2-formamido-N(1)-(5-O-phospho-beta-D-ribosyl)acetamidine + ATP = 5-amino-1-(5-phospho-beta-D-ribosyl)imidazole + ADP + phosphate + H(+). The enzyme catalyses 5-phospho-beta-D-ribosylamine + glycine + ATP = N(1)-(5-phospho-beta-D-ribosyl)glycinamide + ADP + phosphate + H(+). Its pathway is purine metabolism; IMP biosynthesis via de novo pathway; 5-amino-1-(5-phospho-D-ribosyl)imidazole from N(2)-formyl-N(1)-(5-phospho-D-ribosyl)glycinamide: step 2/2. The protein operates within purine metabolism; IMP biosynthesis via de novo pathway; N(1)-(5-phospho-D-ribosyl)glycinamide from 5-phospho-alpha-D-ribose 1-diphosphate: step 2/2. Functionally, catalyzes the second and fifth step in the 'de novo' purine biosynthesis pathway; contains phosphoribosylamine--glycine ligase (GARS) and phosphoribosylformylglycinamidine cyclo-ligase (AIRS) activities. The polypeptide is Bifunctional purine biosynthetic protein ADE5,7 (Cryptococcus neoformans var. grubii serotype A (strain H99 / ATCC 208821 / CBS 10515 / FGSC 9487) (Filobasidiella neoformans var. grubii)).